A 316-amino-acid chain; its full sequence is Ester hydrolase C11orf54 homolog (316 aa).

Zn(2+) is bound by residues His-267, His-269, and His-279.

In terms of assembly, monomer. It depends on Zn(2+) as a cofactor.

It localises to the nucleus. The protein resides in the cytoplasm. Exhibits ester hydrolase activity on the substrate p-nitrophenyl acetate, in vitro. May regulate DNA damage and repair by regulating HIF1A degradation via chaperone-mediated autophagy (CMA). The sequence is that of Ester hydrolase C11orf54 homolog from Xenopus laevis (African clawed frog).